Consider the following 57-residue polypeptide: Phylloseptin-Az4 (57 aa).

The signal sequence occupies residues 1 to 13; sequence LVLFLGLVSLSIC. Positions 14–35 are excised as a propeptide; sequence EEEKRETEEEENDQEEDDKSEE. Residues 16-35 are disordered; the sequence is EKRETEEEENDQEEDDKSEE. Residues 21 to 32 are compositionally biased toward acidic residues; it reads EEEENDQEEDDK. Position 56 is a leucine amide (L56).

Expressed by the skin glands.

Its subcellular location is the secreted. Functionally, has antibacterial activity against the Gram-positive bacterium M.luteus ATCC 49732 (MIC=1.3 uM). Does not inhibit the growth of the fungus C.albicans. The protein is Phylloseptin-Az4 (psn12) of Pithecopus azureus (Orange-legged monkey tree frog).